The sequence spans 345 residues: Phosphoribosylformylglycinamidine cyclo-ligase (345 aa).

This sequence belongs to the AIR synthase family.

It localises to the cytoplasm. The catalysed reaction is 2-formamido-N(1)-(5-O-phospho-beta-D-ribosyl)acetamidine + ATP = 5-amino-1-(5-phospho-beta-D-ribosyl)imidazole + ADP + phosphate + H(+). Its pathway is purine metabolism; IMP biosynthesis via de novo pathway; 5-amino-1-(5-phospho-D-ribosyl)imidazole from N(2)-formyl-N(1)-(5-phospho-D-ribosyl)glycinamide: step 2/2. The protein is Phosphoribosylformylglycinamidine cyclo-ligase of Anaeromyxobacter dehalogenans (strain 2CP-1 / ATCC BAA-258).